A 441-amino-acid chain; its full sequence is uncharacterized protein (441 aa).

ATP is bound at residue 217-224; sequence GETGTGKT.

It belongs to the GSP E family.

This is an uncharacterized protein from Bacillus anthracis.